The following is a 1230-amino-acid chain: Cullin-associated NEDD8-dissociated protein 1 (1230 aa).

Alanine 2 bears the N-acetylalanine mark. 12 HEAT repeats span residues 2 to 39 (ASASYHISNLLEKMTSSDKDFRFMATNDLMTELQKDSI), 44 to 81 (DSERKVVKMILRLLEDKNGEVQNLAVKCLGPLVSKVKE), 83 to 119 (QVETIVDTLCTNMLSDKEQLRDISSIGLKTVIGELPP), 131 to 165 (CKKITGRLTSAIAKQEDVSVQLEALDIMADMLSRQ), 171 to 208 (NFHPSILTCLLPQLTSPRLAVRKRTIIALGHLVMSCGN), 210 to 247 (VFVDLIEHLLSELSKNDSMSTTRTYIQCIAAISRQAGH), 248 to 282 (RIGEYLEKIIPLVVKFCNVDDDELREYCIQAFESF), 289 to 366 (EVYP…TRHE), 370 to 407 (EFYKTVSPALIARFKEREENVKADVFHAYLSLLKQTRP), 424 to 467 (PLTM…VLPG), 471 to 510 (QHIPVLVPGIIFSLNDKSSSSNLKIDALSCLYVILCNHSP), and 515 to 552 (PHVQALVPPVVACVGDPFYKITSEALLVTQQLVKVIRP). Residues 315 to 344 (DEDEDENAMDADGGDDDDQGSDDEYSDDDD) are disordered. Serine 335 is subject to Phosphoserine. Phosphoserine is present on serine 558. 15 HEAT repeats span residues 563–602 (PYIKDLFTCTIKRLKAADIDQEVKERAISCMGQIICNLGD), 606–643 (PDLSNTLQIFLERLKNEITRLTTVKALTLIAGSPLKID), 646–683 (PVLGEGVPILASFLRKNQRALKLGTLSALDILIKNYSD), 688–725 (AMIDAVLDELPPLISESDMHVSQMAISFLTTLAKVYPS), 729–768 (KISGSILNELIGLVRSPLLQGGALSAMLDFFQALVVTGTN), 770–808 (LGYMDLLRMLTGPVYSQSTALTHKQSYYSIAKCVAALTR), 809–845 (ACPKEGPAVVGQFIQDVKNSRSTDSIRLLALLSLGEV), 852–889 (SGQLELKSVILEAFSSPSEEVKSAASYALGSISVGNLP), 890–927 (EYLPFVLQEITSQPKRQYLLLHSLKEIISSASVAGLKP), 928–960 (YVENIWALLLKHCECAEEGTRNVVAECLGKLTL), 961–998 (IDPETLLPRLKGYLISGSSYARSSVVTAVKFTISDHPQ), 1002–1039 (PLLKNCIGDFLKTLEDPDLNVRRVALVTFNSAAHNKPS), 1043–1097 (DLLD…DSCL), 1099–1133 (RLDIFEFLNHVEDGLKDHYDIKMLTFLMLVRLSTL), and 1140–1189 (QRLD…IPEA). At lysine 971 the chain carries N6-acetyllysine.

This sequence belongs to the CAND family. Interacts with TBP. Part of a complex that contains CUL1 and RBX1. Interacts with unneddylated cullins: interacts with CUL1, CUL2, CUL3, CUL4A, CUL4B and CUL5. Does not bind neddylated CUL1. Interaction with cullins is abolished in presence of COMMD1, which antagonizes with CAND1 for interacting with cullins. Interacts with ERCC6. Interacts with DCUN1D1, DCUN1D2, DCUN1D3, DCUN1D4 and DCUN1D5; these interactions are bridged by cullins and strongly inhibits the neddylation of cullins.

The protein resides in the cytoplasm. It is found in the nucleus. Its function is as follows. Key assembly factor of SCF (SKP1-CUL1-F-box protein) E3 ubiquitin ligase complexes that promotes the exchange of the substrate-recognition F-box subunit in SCF complexes, thereby playing a key role in the cellular repertoire of SCF complexes. Acts as a F-box protein exchange factor. The exchange activity of CAND1 is coupled with cycles of neddylation conjugation: in the deneddylated state, cullin-binding CAND1 binds CUL1-RBX1, increasing dissociation of the SCF complex and promoting exchange of the F-box protein. Probably plays a similar role in other cullin-RING E3 ubiquitin ligase complexes. The sequence is that of Cullin-associated NEDD8-dissociated protein 1 (Cand1) from Mus musculus (Mouse).